The sequence spans 201 residues: Imidazole glycerol phosphate synthase subunit HisH (201 aa).

In terms of domain architecture, Glutamine amidotransferase type-1 spans 1–201; that stretch reads MVFIADYGAG…LKVLANFAEL (201 aa). Cysteine 79 functions as the Nucleophile in the catalytic mechanism. Residues histidine 183 and glutamate 185 contribute to the active site.

As to quaternary structure, heterodimer of HisH and HisF.

The protein resides in the cytoplasm. The catalysed reaction is 5-[(5-phospho-1-deoxy-D-ribulos-1-ylimino)methylamino]-1-(5-phospho-beta-D-ribosyl)imidazole-4-carboxamide + L-glutamine = D-erythro-1-(imidazol-4-yl)glycerol 3-phosphate + 5-amino-1-(5-phospho-beta-D-ribosyl)imidazole-4-carboxamide + L-glutamate + H(+). It catalyses the reaction L-glutamine + H2O = L-glutamate + NH4(+). The protein operates within amino-acid biosynthesis; L-histidine biosynthesis; L-histidine from 5-phospho-alpha-D-ribose 1-diphosphate: step 5/9. IGPS catalyzes the conversion of PRFAR and glutamine to IGP, AICAR and glutamate. The HisH subunit catalyzes the hydrolysis of glutamine to glutamate and ammonia as part of the synthesis of IGP and AICAR. The resulting ammonia molecule is channeled to the active site of HisF. The polypeptide is Imidazole glycerol phosphate synthase subunit HisH (Chlorobium chlorochromatii (strain CaD3)).